We begin with the raw amino-acid sequence, 126 residues long: MIRTMLQGKLHRVKVTQADLHYEGSCAIDQDFMDAAGILEYEAIDIYNVDNGQRFSTYAIAGERGSRIISVNGAAARLACVGDKLIICSYVQMSDEQARSHNPKVAYFSGDNELQRQAKAIPVQVA.

The Schiff-base intermediate with substrate; via pyruvic acid role is filled by serine 25. At serine 25 the chain carries Pyruvic acid (Ser). Threonine 57 is a binding site for substrate. The active-site Proton donor is tyrosine 58. 73–75 (GAA) provides a ligand contact to substrate.

This sequence belongs to the PanD family. As to quaternary structure, heterooctamer of four alpha and four beta subunits. Requires pyruvate as cofactor. Is synthesized initially as an inactive proenzyme, which is activated by self-cleavage at a specific serine bond to produce a beta-subunit with a hydroxyl group at its C-terminus and an alpha-subunit with a pyruvoyl group at its N-terminus.

It is found in the cytoplasm. It catalyses the reaction L-aspartate + H(+) = beta-alanine + CO2. The protein operates within cofactor biosynthesis; (R)-pantothenate biosynthesis; beta-alanine from L-aspartate: step 1/1. Catalyzes the pyruvoyl-dependent decarboxylation of aspartate to produce beta-alanine. The sequence is that of Aspartate 1-decarboxylase from Pectobacterium carotovorum subsp. carotovorum (strain PC1).